Here is an 89-residue protein sequence, read N- to C-terminus: Small ribosomal subunit protein bS20 (89 aa).

It belongs to the bacterial ribosomal protein bS20 family.

In terms of biological role, binds directly to 16S ribosomal RNA. This chain is Small ribosomal subunit protein bS20, found in Helicobacter pylori (strain P12).